Consider the following 178-residue polypeptide: Histone deacetylase complex subunit SAP30L (178 aa).

2 cysteine pairs are disulfide-bonded: cysteine 24/cysteine 25 and cysteine 33/cysteine 69. The Atypical zinc finger occupies 24-72; sequence CCLIEDAERCGRPAGNASFSKRIQKSISQRKLKLDIDKSVRHLYICDFH. The interval 80-99 is disordered; that stretch reads RNKRKRKTSDDGGESPDHEV. The Nuclear localization signal (NLS) signature appears at 81–86; the sequence is NKRKRK. Positions 83 to 85 are important for DNA and phosphoinositide binding; it reads RKR.

This sequence belongs to the SAP30 family. In terms of assembly, interacts with components of the histone deacetylase complex sin3a, hdac1 and hdac2. Binds histones and nucleosomes. As to expression, detected in embryos at 2dpf (at protein level). Widely expressed during embryogenesis and in adults.

It localises to the nucleus. The protein resides in the nucleolus. Functions as a transcription repressor, probably via its interaction with histone deacetylase complexes. Required for normal expression of numerous target genes. Involved in the functional recruitment of the class 1 Sin3-histone deacetylase complex (HDAC) to the nucleolus. Binds DNA, apparently without sequence-specificity, and bends bound double-stranded DNA. Binds phosphoinositol phosphates (phosphoinositol 3-phosphate, phosphoinositol 4-phosphate and phosphoinositol 5-phosphate) via the same basic sequence motif that mediates DNA binding and nuclear import. In Danio rerio (Zebrafish), this protein is Histone deacetylase complex subunit SAP30L (sap30l).